We begin with the raw amino-acid sequence, 1353 residues long: Inhibitor of Bruton tyrosine kinase (1353 aa).

ANK repeat units follow at residues 51–80 (FGRN…DLLV) and 85–114 (SGWT…SLYI). RCC1 repeat units lie at residues 141-194 (PTDV…FLSQ), 195-246 (KGQV…VLTE), and 248-301 (GCVY…LWTR). BTB domains follow at residues 564 to 644 (HDVT…DFLT) and 768 to 836 (CDVT…VVIK). Residues 806–835 (SSCAALEMPIHSDILKVILDYLYTDEAVVI) form an ANK 3 repeat. Positions 970–1001 (HSETMFKKAKTKAKKKPRKRSDSSGGYNLSDI) are disordered. Basic residues predominate over residues 976–988 (KKAKTKAKKKPRK). The residue at position 990 (Ser990) is a Phosphoserine. Positions 992–1001 (SSGGYNLSDI) are enriched in polar residues. Ser1004, Ser1030, Ser1033, Ser1039, Ser1045, Ser1054, Ser1083, Ser1111, Ser1113, and Ser1116 each carry phosphoserine. The interval 1134–1155 (KCGATPKSHLGKTVSHGVKLSQ) is disordered.

As to quaternary structure, interacts with the PH domain of BTK. Isoform 2 does not interact with BTK. Expressed in DeFew, HEK293T, HeLa and in Jurkat, MC3 and NB4 lymphoid cells (at protein level). Isoform 1 is the predominant isoform expressed in all examined tissues and cell lines. Highly expressed in hemopoietic tissues (fetal liver, spleen, lymph node, thymus, peripheral blood leukocytes and bone marrow). Weakly or not expressed in other tissues.

The protein localises to the cytoplasm. Its subcellular location is the membrane. The protein resides in the nucleus. Its function is as follows. Acts as an inhibitor of BTK tyrosine kinase activity, thereby playing a role in B-cell development. Down-regulates BTK kinase activity, leading to interference with BTK-mediated calcium mobilization and NF-kappa-B-driven transcription. This Homo sapiens (Human) protein is Inhibitor of Bruton tyrosine kinase (IBTK).